A 243-amino-acid polypeptide reads, in one-letter code: MLILLPAVDVVDGRAVRLVQGKAGSETEYGSALDAALGWQRDGAEWIHLVDLDAAFGRGSNRELLAEVVGKLDVQVELSGGIRDDDSLAAALATGCARVNLGTAALENPQWCARAIGEHGDKVAVGLDVQTIDGQHRLRGRGWETDGGDLWEVLERLERQGCSRYVVTDVTKDGTLGGPNLDLLGAVADRTDAPVIASGGVSSLDDLRAIATLTGRGVEGAIVGKALYAGRFTLPQALAAVAE.

Asp-9 serves as the catalytic Proton acceptor. Asp-128 acts as the Proton donor in catalysis.

Belongs to the HisA/HisF family.

It is found in the cytoplasm. The catalysed reaction is 1-(5-phospho-beta-D-ribosyl)-5-[(5-phospho-beta-D-ribosylamino)methylideneamino]imidazole-4-carboxamide = 5-[(5-phospho-1-deoxy-D-ribulos-1-ylimino)methylamino]-1-(5-phospho-beta-D-ribosyl)imidazole-4-carboxamide. It catalyses the reaction N-(5-phospho-beta-D-ribosyl)anthranilate = 1-(2-carboxyphenylamino)-1-deoxy-D-ribulose 5-phosphate. The protein operates within amino-acid biosynthesis; L-histidine biosynthesis; L-histidine from 5-phospho-alpha-D-ribose 1-diphosphate: step 4/9. It participates in amino-acid biosynthesis; L-tryptophan biosynthesis; L-tryptophan from chorismate: step 3/5. Functionally, involved in both the histidine and tryptophan biosynthetic pathways. The chain is Phosphoribosyl isomerase A from Mycobacterium avium (strain 104).